Here is a 547-residue protein sequence, read N- to C-terminus: Chaperonin GroEL (547 aa).

ATP contacts are provided by residues 30-33, Lys51, 87-91, Gly415, 479-481, and Asp495; these read TLGP, DGTTT, and NAA.

It belongs to the chaperonin (HSP60) family. In terms of assembly, forms a cylinder of 14 subunits composed of two heptameric rings stacked back-to-back. Interacts with the co-chaperonin GroES.

The protein localises to the cytoplasm. The enzyme catalyses ATP + H2O + a folded polypeptide = ADP + phosphate + an unfolded polypeptide.. In terms of biological role, together with its co-chaperonin GroES, plays an essential role in assisting protein folding. The GroEL-GroES system forms a nano-cage that allows encapsulation of the non-native substrate proteins and provides a physical environment optimized to promote and accelerate protein folding. The sequence is that of Chaperonin GroEL from Bordetella bronchiseptica (strain ATCC BAA-588 / NCTC 13252 / RB50) (Alcaligenes bronchisepticus).